The sequence spans 509 residues: Probable malate:quinone oxidoreductase (509 aa).

The interval 490 to 509 (LGLNEKEPVSGASEKELVYS) is disordered. Over residues 493 to 509 (NEKEPVSGASEKELVYS) the composition is skewed to basic and acidic residues.

This sequence belongs to the MQO family. Requires FAD as cofactor.

It catalyses the reaction (S)-malate + a quinone = a quinol + oxaloacetate. It functions in the pathway carbohydrate metabolism; tricarboxylic acid cycle; oxaloacetate from (S)-malate (quinone route): step 1/1. This chain is Probable malate:quinone oxidoreductase, found in Geobacillus sp. (strain WCH70).